Here is a 326-residue protein sequence, read N- to C-terminus: DNA-directed RNA polymerase subunit alpha (326 aa).

Residues 1 to 232 (MQGSARNFLK…EQLSSFVELE (232 aa)) are alpha N-terminal domain (alpha-NTD). Residues 246–326 (FDPQLLAAVD…NWPPVDLMSE (81 aa)) form an alpha C-terminal domain (alpha-CTD) region.

It belongs to the RNA polymerase alpha chain family. Homodimer. The RNAP catalytic core consists of 2 alpha, 1 beta, 1 beta' and 1 omega subunit. When a sigma factor is associated with the core the holoenzyme is formed, which can initiate transcription.

It carries out the reaction RNA(n) + a ribonucleoside 5'-triphosphate = RNA(n+1) + diphosphate. Its function is as follows. DNA-dependent RNA polymerase catalyzes the transcription of DNA into RNA using the four ribonucleoside triphosphates as substrates. This Ruthia magnifica subsp. Calyptogena magnifica protein is DNA-directed RNA polymerase subunit alpha.